The following is a 112-amino-acid chain: MDISRMGAQAQITSLEELSGGPAGAAHVAEFERAMGGAGSLGGDLLSELGQIRERFSQAKQELQMELSTPGDDPNSLMQMQWSLMRITMQEELIAKTVGRMSQNVETLMKTQ.

The protein belongs to the YscI/HrpB family. In terms of assembly, homomultimer (through its C-terminal region).

Functionally, component of the type III secretion (T3S) injectisome that translocates effector toxins into host cells, facilitating the establishment and dissemination of infection. Polymerizes into flexible and regularly twisted fibrils and plays an essential role in needle assembly. This chain is Type III inner-rod protein PscI (pscI), found in Pseudomonas aeruginosa (strain ATCC 15692 / DSM 22644 / CIP 104116 / JCM 14847 / LMG 12228 / 1C / PRS 101 / PAO1).